Here is a 211-residue protein sequence, read N- to C-terminus: Thymidylate kinase (211 aa).

Gly-7–Ser-14 contributes to the ATP binding site.

This sequence belongs to the thymidylate kinase family.

The catalysed reaction is dTMP + ATP = dTDP + ADP. Functionally, phosphorylation of dTMP to form dTDP in both de novo and salvage pathways of dTTP synthesis. This Chlamydia abortus (strain DSM 27085 / S26/3) (Chlamydophila abortus) protein is Thymidylate kinase.